Here is a 416-residue protein sequence, read N- to C-terminus: Advanced glycosylation end product-specific receptor (416 aa).

The first 22 residues, 1-22 (MAAGAVVGAWMLVLSLGGTVTG), serve as a signal peptide directing secretion. Residues 23-115 (DQNITARIGK…KETKSNYRVR (93 aa)) form the Ig-like V-type domain. Residues 23–352 (DQNITARIGK…VEGPGLETLA (330 aa)) are Extracellular-facing. Asparagine 25 and asparagine 80 each carry an N-linked (GlcNAc...) asparagine glycan. Intrachain disulfides connect cysteine 38–cysteine 98 and cysteine 143–cysteine 207. 2 consecutive Ig-like C2-type domains span residues 123–220 (PEIV…RALH) and 238–327 (PNVD…RAVS). The helical transmembrane segment at 353 to 373 (LTLGILGGLGTVALLIGVIVW) threads the bilayer. At 374-416 (HRRRQRKGQERKVPENQEEEEEERAELNQPEEPEAAESSTGGP) the chain is on the cytoplasmic side. A disordered region spans residues 377-416 (RQRKGQERKVPENQEEEEEERAELNQPEEPEAAESSTGGP). Acidic residues predominate over residues 389–408 (NQEEEEEERAELNQPEEPEA).

Constitutive homodimer; disulfide-linked. Forms homooligomers. Interacts with S100A1 and APP. Interacts with S100B, S100A12 and S100A14. Interacts with TIRAP. Interacts with HMGB1. Interacts with LGP2; this interaction plays an important role in AGER-mediated pro-inflammatory responses and cytokine release. Interacts with double-strand break repair protein MRE11 which is a core component of the MRN complex; the interaction enhances MRE11 endonuclease activity and promotes DNA repair. Interacts with the MCM2-7 complex via interaction with complex member MCM2; the interaction is increased following DNA replication stress and stabilizes the MCM2-7 complex at replication forks. In terms of processing, phosphorylated on its cytoplasmic domain by PKCzeta/PRKCZ upon ligand binding. Phosphorylated by ATM following DNA damage. Post-translationally, targeted by the ubiquitin E3 ligase subunit FBXO10 to mediate its ubiquitination and degradation. As to expression, endothelial cells.

It localises to the cell membrane. The protein resides in the cell projection. The protein localises to the phagocytic cup. Its subcellular location is the early endosome. It is found in the nucleus. In terms of biological role, cell surface pattern recognition receptor that senses endogenous stress signals with a broad ligand repertoire including advanced glycation end products, S100 proteins, high-mobility group box 1 protein/HMGB1, amyloid beta/APP oligomers, nucleic acids, histones, phospholipids and glycosaminoglycans. Advanced glycosylation end products are nonenzymatically glycosylated proteins which accumulate in vascular tissue in aging and at an accelerated rate in diabetes. These ligands accumulate at inflammatory sites during the pathogenesis of various diseases including diabetes, vascular complications, neurodegenerative disorders and cancers, and RAGE transduces their binding into pro-inflammatory responses. Upon ligand binding, uses TIRAP and MYD88 as adapters to transduce the signal ultimately leading to the induction of inflammatory cytokines IL6, IL8 and TNFalpha through activation of NF-kappa-B. Interaction with S100A12 on endothelium, mononuclear phagocytes, and lymphocytes triggers cellular activation, with generation of key pro-inflammatory mediators. Interaction with S100B after myocardial infarction may play a role in myocyte apoptosis by activating ERK1/2 and p53/TP53 signaling. Contributes to the translocation of amyloid-beta peptide (ABPP) across the cell membrane from the extracellular to the intracellular space in cortical neurons. ABPP-initiated RAGE signaling, especially stimulation of p38 mitogen-activated protein kinase (MAPK), has the capacity to drive a transport system delivering ABPP as a complex with RAGE to the intraneuronal space. Participates in endothelial albumin transcytosis together with HMGB1 through the RAGE/SRC/Caveolin-1 pathway, leading to endothelial hyperpermeability. Mediates the loading of HMGB1 in extracellular vesicles (EVs) that shuttle HMGB1 to hepatocytes by transferrin-mediated endocytosis and subsequently promote hepatocyte pyroptosis by activating the NLRP3 inflammasome. Binds to DNA and promotes extracellular hypomethylated DNA (CpG DNA) uptake by cells via the endosomal route to activate inflammatory responses. Mediates phagocytosis by non-professional phagocytes (NPP) and this is enhanced by binding to ligands including RNA, DNA, HMGB1 and histones. Promotes NPP-mediated phagocytosis of Saccharomyces cerevisiae spores by binding to RNA attached to the spore wall. Also promotes NPP-mediated phagocytosis of apoptotic cells. Following DNA damage, recruited to DNA double-strand break sites where it colocalizes with the MRN repair complex via interaction with double-strand break repair protein MRE11. Enhances the endonuclease activity of MRE11, promoting the end resection of damaged DNA. Promotes DNA damage repair in trophoblasts which enhances trophoblast invasion and contributes to placental development and maintenance. Protects cells from DNA replication stress by localizing to damaged replication forks where it stabilizes the MCM2-7 complex and promotes faithful progression of the replication fork. The polypeptide is Advanced glycosylation end product-specific receptor (AGER) (Bos taurus (Bovine)).